A 96-amino-acid chain; its full sequence is Protein Vpr (96 aa).

The homooligomerization stretch occupies residues 1–42 (MEQAPEDQGPQREPYNEWALELLEELKQEAVRHFPRPWLHNL). A phosphoserine; by host mark is found at Ser79, Ser94, and Ser96.

Belongs to the HIV-1 VPR protein family. In terms of assembly, homooligomer, may form homodimer. Interacts with p6-gag region of the Pr55 Gag precursor protein through a (Leu-X-X)4 motif near the C-terminus of the P6gag protein. Interacts with host UNG. May interact with host RAD23A/HHR23A. Interacts with host VPRBP/DCAF1, leading to hijack the CUL4A-RBX1-DDB1-DCAF1/VPRBP complex, mediating ubiquitination of host proteins such as TERT and ZGPAT and arrest of the cell cycle in G2 phase. Phosphorylated on several residues by host. These phosphorylations regulate VPR activity for the nuclear import of the HIV-1 pre-integration complex.

The protein localises to the virion. The protein resides in the host nucleus. Its subcellular location is the host extracellular space. In terms of biological role, during virus replication, may deplete host UNG protein, and incude G2-M cell cycle arrest. Acts by targeting specific host proteins for degradation by the 26S proteasome, through association with the cellular CUL4A-DDB1 E3 ligase complex by direct interaction with host VPRPB/DCAF-1. Cell cycle arrest reportedly occurs within hours of infection and is not blocked by antiviral agents, suggesting that it is initiated by the VPR carried into the virion. Additionally, VPR induces apoptosis in a cell cycle dependent manner suggesting that these two effects are mechanistically linked. Detected in the serum and cerebrospinal fluid of AIDS patient, VPR may also induce cell death to bystander cells. During virus entry, plays a role in the transport of the viral pre-integration (PIC) complex to the host nucleus. This function is crucial for viral infection of non-dividing macrophages. May act directly at the nuclear pore complex, by binding nucleoporins phenylalanine-glycine (FG)-repeat regions. This chain is Protein Vpr, found in Homo sapiens (Human).